A 576-amino-acid polypeptide reads, in one-letter code: Zinc finger protein 791 (576 aa).

Positions 4-90 (VAFKDVSVSF…AETFSPNLSV (87 aa)) constitute a KRAB domain. 17 C2H2-type zinc fingers span residues 100–122 (YECT…MRSH), 132–154 (YKCK…ERSH), 160–182 (YKCK…EQTH), 188–210 (YECK…ERIH), 216–238 (YECK…ERTH), 244–266 (YACK…MITH), 272–294 (YKCK…ERIH), 300–322 (YTCK…ERIH), 328–350 (YKCK…VRVH), 356–378 (YKCK…ERTH), 384–406 (YECK…KRNH), 412–434 (YECK…MITH), 440–462 (YKCR…ERTH), 468–490 (YECK…KRTH), 496–518 (YECK…MRMH), 524–546 (YKCK…TRIH), and 552–574 (LECK…MRMH).

This sequence belongs to the krueppel C2H2-type zinc-finger protein family.

It is found in the nucleus. In terms of biological role, may be involved in transcriptional regulation. The polypeptide is Zinc finger protein 791 (ZNF791) (Pongo abelii (Sumatran orangutan)).